We begin with the raw amino-acid sequence, 600 residues long: MRISQICTVLSTVTSAVAVGVNPLPAPREISWGSSGPKSIAGELQLRTDSDSADGIVADAWNRAWETIVALRWVPAATEAPISSFEPFPTPTAGASKKSKRASNSLQYVNVQVKDIEADLQHGVDESYTLDVEEDSDTITINAETVWGALHAFTTLQQLVISDGHGGLIIEEPVNIKDSPLYPYRGIMLDTGRNFVSLPKIFEQLEGMSLSKLNVLHWHIDDAQSWPIWVDVYPEMVKDAYSPHEIYSRNDVRNIVNYARARGIRVIPEIDMPSHSSSGWKQVDPEMVTCTDSWWSNDDWPLHTAVEPNPGQLDIIYNKTYEVVGNVYKELSDIFPDHWFHVGGDEIQPNCFNFSTHVTKWFAEDPSRTYHDLAQYWVDHAVPIFQNYSQERRLVMWEDIALSADNAHDVPKNIVMQSWNNGLEYISNLTARGYDVIVSSSDFLYLDCGHGGFVTNDPRYNVMANPDANTPNFNYGGNGGSWCAPYKTWQRIYDYDFTLNLTETQAKHIIGATAPLWGEQVDDINVSSMFWPRAAALAELVWSGNRDANGNKRTTEMTQRILNFREYLVANGVQAQALVPKYCLQHPHACDLYRNQAAIQ.

Positions 1–18 (MRISQICTVLSTVTSAVA) are cleaved as a signal peptide. A propeptide spanning residues 19–96 (VGVNPLPAPR…PFPTPTAGAS (78 aa)) is cleaved from the precursor. O-linked (Man...) threonine glycosylation occurs at Thr78. O-linked (Man...) serine glycosylation is found at Ser83 and Ser84. Catalysis depends on charge relay system residues Asp222 and His275. Cys290 and Cys351 are joined by a disulfide. Residue Asn318 is glycosylated (N-linked (HexNAc...) asparagine). Catalysis depends on Glu346, which acts as the Charge relay system. An N-linked (GlcNAc...) asparagine glycan is attached at Asn353. An N-linked (HexNAc...) asparagine glycan is attached at Asn387. A glycan (N-linked (GlcNAc...) asparagine) is linked at Asn428. Cys448 and Cys483 form a disulfide bridge. N-linked (GlcNAc...) asparagine glycans are attached at residues Asn500 and Asn525. Cys583 and Cys590 are oxidised to a cystine.

This sequence belongs to the glycosyl hydrolase 20 family. In terms of assembly, homodimer. Oligosaccharide moieties may also take part in the dimerization. Dimerization is a pH-dependent reversible process. The individual catalytic cores dimerize and the catalytic core of one subunit in the active dimer interacts with the propeptide of the second subunit. Post-translationally, the precursor of the propeptide is intracellularly processed in the endoplasmic reticulum by a dibasic peptidase, different from Kex2, removing Lys-97--Arg-101 from the precursor producing the activated propeptide. The propeptide binds non-covalently to the catalytic domain. Propeptide binding is necessary for full activation of the enzyme, dimerization of the catalytic domain and secretion of the active enzyme. In terms of processing, O-glycosylated. O-glycosylation (O-mannosylation) at the C-terminus of the propeptide is necessary for full enzyme activity. N-glycosylated. N-glycosylation of the catalytic domain increases the stability and solubility of the enzyme, especially at low pH. Contains high mannose-type (M4-M11) N-glycans at the C-terminus. N-glycan deglycosylation does not affect enzyme activity.

It is found in the secreted. It carries out the reaction Hydrolysis of terminal non-reducing N-acetyl-D-hexosamine residues in N-acetyl-beta-D-hexosaminides.. Activated by non-covalent binding of the propeptide to the catalytic domain. The concentration of the propeptide is regulated in the endoplasmic reticulum and the propeptide thus regulates the amount of the active enzyme at various stages of the growth cycle. The dimeric enzyme has about half of the maximal activity in the presence of one bound propeptide, but is fully active with two bound O-glycosylated propeptides. Inhibited by N-acetylglucosamine (NAG)-thiazoline. In terms of biological role, selectively hydrolyzes GlcNAcbeta(1-&gt;4)GlcNAc (N,N'-diacetylchitobiose) and Gal-NAcbeta(1-&gt;4)GlcNAc, but not their C-2 epimers GlcNAcbeta(1-&gt;4)ManNAc or Gal-NAcbeta(1-&gt;4)ManNAc. However, hydrolyzes both GlcNAcbeta(1-&gt;6)GlcNAc and GlcNAcbeta(1-&gt;6)ManNAc. Part of the binary chitinolytic system. Involved in hydrolysis of chitobiose and higher chito-oligomers (produced from cell wall chitin by endochitinases), thus contributing to the formation of germ tubes, fruit-bodies and septa during hyphenation. Hydrolyzes synthetic substrate p-nitrophenyl-beta-N-acetyl-D-glucosaminide (pNP-GlcNAc). Hydrolyzes synthetic substrate p-nitrophenyl-beta-N-acetyl-D-galactosaminide (pNP-GalNAc). Hydrolyzes chromogenic substrate 4-nitrophenyl-2-acetamido-2-deoxyglucopyranoside. The polypeptide is Beta-hexosaminidase (Aspergillus oryzae (Yellow koji mold)).